The chain runs to 378 residues: Erythronate-4-phosphate dehydrogenase (378 aa).

Residues S45 and T66 each coordinate substrate. 2 residues coordinate NAD(+): D146 and T175. The active site involves R208. NAD(+) is bound at residue D232. Residue E237 is part of the active site. Residue H254 is the Proton donor of the active site. NAD(+) is bound at residue G257. Residue Y258 coordinates substrate.

It belongs to the D-isomer specific 2-hydroxyacid dehydrogenase family. PdxB subfamily. In terms of assembly, homodimer.

The protein localises to the cytoplasm. It carries out the reaction 4-phospho-D-erythronate + NAD(+) = (R)-3-hydroxy-2-oxo-4-phosphooxybutanoate + NADH + H(+). It participates in cofactor biosynthesis; pyridoxine 5'-phosphate biosynthesis; pyridoxine 5'-phosphate from D-erythrose 4-phosphate: step 2/5. Catalyzes the oxidation of erythronate-4-phosphate to 3-hydroxy-2-oxo-4-phosphonooxybutanoate. The sequence is that of Erythronate-4-phosphate dehydrogenase from Shigella flexneri serotype 5b (strain 8401).